A 396-amino-acid chain; its full sequence is L-lactate dehydrogenase (396 aa).

The FMN hydroxy acid dehydrogenase domain occupies 1–380; it reads MIISAASDYR…SGDSLVQELG (380 aa). Tyr24 provides a ligand contact to substrate. The FMN site is built by Ser106 and Gln127. Substrate is bound at residue Tyr129. Thr155 is an FMN binding site. Arg164 lines the substrate pocket. Lys251 contacts FMN. His275 serves as the catalytic Proton acceptor. Position 278 (Arg278) interacts with substrate. 306–330 is a binding site for FMN; that stretch reads DSGIRNGLDVVRMIALGADTVLLGR.

The protein belongs to the FMN-dependent alpha-hydroxy acid dehydrogenase family. Requires FMN as cofactor.

It localises to the cell inner membrane. The enzyme catalyses (S)-lactate + A = pyruvate + AH2. Functionally, catalyzes the conversion of L-lactate to pyruvate. Is coupled to the respiratory chain. The protein is L-lactate dehydrogenase of Salmonella typhimurium (strain LT2 / SGSC1412 / ATCC 700720).